The chain runs to 77 residues: Putative defensin-like protein 60 (77 aa).

Residues 1–25 form the signal peptide; it reads MKMNITKSYVILFLVVVMTNSLSNS. Disulfide bonds link C41–C75, C45–C68, C54–C73, and C58–C74.

This sequence belongs to the DEFL family.

The protein localises to the secreted. The polypeptide is Putative defensin-like protein 60 (Arabidopsis thaliana (Mouse-ear cress)).